A 509-amino-acid polypeptide reads, in one-letter code: tRNA-2-methylthio-N(6)-dimethylallyladenosine synthase (509 aa).

The disordered stretch occupies residues 1–21 (MNEKQRIESGQVNPSDKKSEK). The 119-residue stretch at 66–184 (RKFYIRTYGC…LPELLSEAYL (119 aa)) folds into the MTTase N-terminal domain. The [4Fe-4S] cluster site is built by C75, C111, C145, C221, C225, and C228. In terms of domain architecture, Radical SAM core spans 207-437 (RTGKIKGWVN…NEVVNEISAK (231 aa)). Residues 440–503 (KEYEGQVVEV…TWSLDGEMVG (64 aa)) form the TRAM domain.

It belongs to the methylthiotransferase family. MiaB subfamily. As to quaternary structure, monomer. The cofactor is [4Fe-4S] cluster.

It is found in the cytoplasm. The catalysed reaction is N(6)-dimethylallyladenosine(37) in tRNA + (sulfur carrier)-SH + AH2 + 2 S-adenosyl-L-methionine = 2-methylsulfanyl-N(6)-dimethylallyladenosine(37) in tRNA + (sulfur carrier)-H + 5'-deoxyadenosine + L-methionine + A + S-adenosyl-L-homocysteine + 2 H(+). Its function is as follows. Catalyzes the methylthiolation of N6-(dimethylallyl)adenosine (i(6)A), leading to the formation of 2-methylthio-N6-(dimethylallyl)adenosine (ms(2)i(6)A) at position 37 in tRNAs that read codons beginning with uridine. In Bacillus licheniformis (strain ATCC 14580 / DSM 13 / JCM 2505 / CCUG 7422 / NBRC 12200 / NCIMB 9375 / NCTC 10341 / NRRL NRS-1264 / Gibson 46), this protein is tRNA-2-methylthio-N(6)-dimethylallyladenosine synthase.